A 191-amino-acid chain; its full sequence is tRNA-specific adenosine deaminase 2 (191 aa).

The region spanning 20-145 (EETEKWMEEA…SVLNIASADL (126 aa)) is the CMP/dCMP-type deaminase domain. His-71 provides a ligand contact to Zn(2+). Glu-73 functions as the Proton donor in the catalytic mechanism. Zn(2+) is bound by residues Cys-107 and Cys-110.

It belongs to the cytidine and deoxycytidylate deaminase family. ADAT2 subfamily. Zn(2+) serves as cofactor.

The catalysed reaction is adenosine(34) in tRNA + H2O + H(+) = inosine(34) in tRNA + NH4(+). Probably participates in deamination of adenosine-34 to inosine in many tRNAs. The protein is tRNA-specific adenosine deaminase 2 (ADAT2) of Homo sapiens (Human).